The following is a 401-amino-acid chain: L-rhamnonate dehydratase (401 aa).

The substrate site is built by histidine 29 and arginine 55. Residues aspartate 222, glutamate 248, and glutamate 276 each coordinate Mg(2+). Histidine 325 acts as the Proton acceptor in catalysis. A substrate-binding site is contributed by glutamate 345.

The protein belongs to the mandelate racemase/muconate lactonizing enzyme family. RhamD subfamily. Homooctamer; tetramer of dimers. Mg(2+) serves as cofactor.

It catalyses the reaction L-rhamnonate = 2-dehydro-3-deoxy-L-rhamnonate + H2O. Functionally, catalyzes the dehydration of L-rhamnonate to 2-keto-3-deoxy-L-rhamnonate (KDR). The polypeptide is L-rhamnonate dehydratase (Escherichia coli O157:H7).